We begin with the raw amino-acid sequence, 120 residues long: Large ribosomal subunit protein eL8 (120 aa).

It belongs to the eukaryotic ribosomal protein eL8 family. As to quaternary structure, part of the 50S ribosomal subunit. Probably part of the RNase P complex.

The protein resides in the cytoplasm. Multifunctional RNA-binding protein that recognizes the K-turn motif in ribosomal RNA, the RNA component of RNase P, box H/ACA, box C/D and box C'/D' sRNAs. The chain is Large ribosomal subunit protein eL8 from Natronomonas pharaonis (strain ATCC 35678 / DSM 2160 / CIP 103997 / JCM 8858 / NBRC 14720 / NCIMB 2260 / Gabara) (Halobacterium pharaonis).